A 439-amino-acid chain; its full sequence is Hemagglutinin-esterase (439 aa).

Positions 1 to 22 are cleaved as a signal peptide; the sequence is MGSTCIAMAPRTLLLLIGCQLV. Residues 12–132 form an esterase domain 1 region; the sequence is TLLLLIGCQL…DNKRWMGNKA (121 aa). Residues 23-407 lie on the Virion surface side of the membrane; sequence FGFNEPLNIV…PVCIYDPLPV (385 aa). Ser-45 (nucleophile) is an active-site residue. Cys-49 and Cys-70 are oxidised to a cystine. Residue Asn-94 is glycosylated (N-linked (GlcNAc...) asparagine; by host). A disulfide bridge links Cys-118 with Cys-167. Residues 133-281 are receptor binding; that stretch reads RFYARVYEKM…GNYKAVSLEY (149 aa). N-linked (GlcNAc...) asparagine; by host glycans are attached at residues Asn-196, Asn-246, Asn-309, and Asn-316. 2 cysteine pairs are disulfide-bonded: Cys-202/Cys-291 and Cys-210/Cys-264. The interval 282-395 is esterase domain 2; the sequence is LLSLPSKAIC…QCPTAANIGY (114 aa). Cys-322 and Cys-327 are oxidised to a cystine. Residue Asn-331 is glycosylated (N-linked (GlcNAc...) asparagine; by host). Active-site charge relay system residues include Asp-342 and His-345. Asn-360 and Asn-374 each carry an N-linked (GlcNAc...) asparagine; by host glycan. Cys-363 and Cys-387 are disulfide-bonded. Residues 408–428 form a helical membrane-spanning segment; it reads VLLGVLLGIAVLIIVFLILYF. The Intravirion portion of the chain corresponds to 429 to 439; sequence MTDSGVRLHEA.

It belongs to the influenza type C/coronaviruses hemagglutinin-esterase family. In terms of assembly, homodimer; disulfide-linked. Forms a complex with the M protein in the pre-Golgi. Associates then with S-M complex to form a ternary complex S-M-HE. In terms of processing, N-glycosylated in the host RER.

The protein localises to the virion membrane. Its subcellular location is the host cell membrane. The enzyme catalyses N-acetyl-9-O-acetylneuraminate + H2O = N-acetylneuraminate + acetate + H(+). The catalysed reaction is N-acetyl-4-O-acetylneuraminate + H2O = N-acetylneuraminate + acetate + H(+). In terms of biological role, structural protein that makes short spikes at the surface of the virus. Contains receptor binding and receptor-destroying activities. Mediates de-O-acetylation of N-acetyl-4-O-acetylneuraminic acid, which is probably the receptor determinant recognized by the virus on the surface of erythrocytes and susceptible cells. This receptor-destroying activity is important for virus release as it probably helps preventing self-aggregation and ensures the efficient spread of the progeny virus from cell to cell. May serve as a secondary viral attachment protein for initiating infection, the spike protein being the major one. May become a target for both the humoral and the cellular branches of the immune system. The protein is Hemagglutinin-esterase of Murine coronavirus (strain JHM) (MHV-JHM).